Consider the following 536-residue polypeptide: Chaperonin GroEL (536 aa).

Residues Thr30–Pro33, Asp86–Thr90, Gly414, and Asp494 contribute to the ATP site.

It belongs to the chaperonin (HSP60) family. As to quaternary structure, forms a cylinder of 14 subunits composed of two heptameric rings stacked back-to-back. Interacts with the co-chaperonin GroES.

Its subcellular location is the cytoplasm. It carries out the reaction ATP + H2O + a folded polypeptide = ADP + phosphate + an unfolded polypeptide.. Functionally, together with its co-chaperonin GroES, plays an essential role in assisting protein folding. The GroEL-GroES system forms a nano-cage that allows encapsulation of the non-native substrate proteins and provides a physical environment optimized to promote and accelerate protein folding. This is Chaperonin GroEL from Methanospirillum hungatei JF-1 (strain ATCC 27890 / DSM 864 / NBRC 100397 / JF-1).